A 304-amino-acid chain; its full sequence is Caspase-6 (304 aa).

Residues 1–29 (MSGAERRPAAGRVQLDSKPTPTTTADGNQ) are disordered. The propeptide occupies 1 to 35 (MSGAERRPAAGRVQLDSKPTPTTTADGNQNITEVD). Over residues 17-29 (SKPTPTTTADGNQ) the composition is skewed to polar residues. The segment at 54-56 (QRR) is tri-arginine exosite. His133 is a catalytic residue. Residues 137–154 (DHVYAYDAQIKIETITNM) form a 130's region region. Residue Cys175 is part of the active site. The propeptide occupies 192 to 204 (SKDETTVNQTEVD).

It belongs to the peptidase C14A family. In terms of assembly, heterotetramer that consists of two anti-parallel arranged heterodimers, each one formed by a 18 kDa (p18) and a 11 kDa (p11) subunit. Heterotetramer that consists of two anti-parallel arranged heterodimers, each one formed by a 18 kDa (Caspase-6 subunit p18) and a 11 kDa (Caspase-6 subunit p11) subunit. Widely expressed.

Its subcellular location is the cytoplasm. It is found in the nucleus. The enzyme catalyses Strict requirement for Asp at position P1 and has a preferred cleavage sequence of Val-Glu-His-Asp-|-.. Its activity is regulated as follows. During activation, the N-terminal prodomain is removed by cleavage. Concomitantly, double cleavage gives rise to a large 18-kDa and a small 11-kDa subunit. The two large and two small subunits then assemble to form the active CASP6 complex. Intramolecular cleavage at Asp-191 is a prerequisite for CASP6 self-activation. In terms of biological role, cysteine protease that plays essential roles in programmed cell death, development and innate immunity. Acts as a non-canonical executioner caspase during apoptosis: localizes in the nucleus and cleaves the nuclear structural protein lamin-A/LMNA thereby inducing nuclear shrinkage and fragmentation. Lamin-A/LMNA cleavage is required for chromatin condensation and nuclear disassembly during apoptotic execution. Plays an essential role in defense against viruses by acting as a central mediator of the ZBP1-mediated pyroptosis, apoptosis, and necroptosis (PANoptosis), independently of its cysteine protease activity. PANoptosis is a unique inflammatory programmed cell death, which provides a molecular scaffold that allows the interactions and activation of machinery required for inflammasome/pyroptosis, apoptosis and necroptosis. The chain is Caspase-6 from Gallus gallus (Chicken).